Reading from the N-terminus, the 119-residue chain is Circadian clock oscillator protein KaiB (119 aa).

It belongs to the KaiB family. May undergo a major conformational rearrangment; in the free state forms homooligomers. When bound to KaiC switches to a monomeric thioredoxin-fold (KaiB(fs)). The active oscillator complex is probably KaiC(6):KaiB(6).

Component of the KaiBC clock protein complex, which constitutes the main circadian regulator in cyanobacteria; it may modify the ATPase activity of KaiC. Its function is as follows. May be a metamorphic protein which reversibly switches between an inactive tetrameric fold and a rare, thioredoxin-like monomeric fold (KaiB(fs)). KaiB(fs) binds phospho-KaiC, and perhaps clock output effectors. The protein is Circadian clock oscillator protein KaiB of Prochlorococcus marinus (strain MIT 9313).